Consider the following 321-residue polypeptide: Probable 1-aminocyclopropane-1-carboxylate oxidase (321 aa).

The 101-residue stretch at P159–P259 folds into the Fe2OG dioxygenase domain. Fe cation-binding residues include H183, D185, and H240.

It belongs to the iron/ascorbate-dependent oxidoreductase family. It depends on Fe cation as a cofactor.

It carries out the reaction 1-aminocyclopropane-1-carboxylate + L-ascorbate + O2 = ethene + L-dehydroascorbate + hydrogen cyanide + CO2 + 2 H2O. It functions in the pathway alkene biosynthesis; ethylene biosynthesis via S-adenosyl-L-methionine; ethylene from S-adenosyl-L-methionine: step 2/2. The protein is Probable 1-aminocyclopropane-1-carboxylate oxidase (ACO) of Dianthus caryophyllus (Carnation).